The chain runs to 84 residues: Large ribosomal subunit protein uL23 (84 aa).

It belongs to the universal ribosomal protein uL23 family. As to quaternary structure, part of the 50S ribosomal subunit. Contacts protein L29.

In terms of biological role, binds to 23S rRNA. One of the proteins that surrounds the polypeptide exit tunnel on the outside of the ribosome. This is Large ribosomal subunit protein uL23 from Halobacterium salinarum (strain ATCC 700922 / JCM 11081 / NRC-1) (Halobacterium halobium).